A 743-amino-acid chain; its full sequence is MEAAAVTVTRSATRRRRRQLQGLAAPEAGTQEEQEDQEPRPRRRRPGRSIKDEEEETVFREVVSFSPDPLPVRYYDKDTTKPISFYLSSLEELLAWKPRLEDGFNVALEPLACRQPPLSSQRPRTLLCHDMMGGYLDDRFIQGSVVQTPYAFYHWQCIDVFVYFSHHTVTIPPVGWTNTAHRHGVCVLGTFITEWNEGGRLCEAFLAGDERSYQAVADRLVQITQFFRFDGWLINIENSLSLAAVGNMPPFLRYLTTQLHRQVPGGLVLWYDSVVQSGQLKWQDELNQHNRVFFDSCDGFFTNYNWREEHLERMLGQAGERRADVYVGVDVFARGNVVGGRFDTDKSLELIRKHGFSVALFAPGWVYECLEKKDFFQNQDKFWGRLERYLPTHSICSLPFVTSFCLGMGARRVCYGQEEAVGPWYHLSAQEIQPLFGEHRLGGDGRGWVRTHCCLEDAWHGGSSLLVRGVIPPEVGNVAVRLFSLQAPVPPKIYLSMVYKLEGPTDVTVALELTTGDAGSCHIGGISVLNAETSSRHSLRPLRVPPTKLARWVGRCGRQLSGGWVQHCYEVSLRGCLLLDLLVCFSRPPGSREEESFTCRLGEIQVVDAASLLAPLPQVQAVTISHIRWQPSASEREGPPALLQLSCTLHWSFLLSQVRCFRIHCWGGMSDDSPGRELPRPEMPMFLGLAFATQYRIVDLLVEAAGPGQDRRMEFLVEPVPKEGFRVPQAEWGRAVLLYSAPA.

An N-acetylmethionine modification is found at Met1. Low complexity predominate over residues 1–11 (MEAAAVTVTRS). The interval 1 to 55 (MEAAAVTVTRSATRRRRRQLQGLAAPEAGTQEEQEDQEPRPRRRRPGRSIKDEEE) is disordered. At Ser66 the chain carries Phosphoserine. In terms of domain architecture, BRCT spans 291 to 383 (RVFFDSCDGF…DFFQNQDKFW (93 aa)).

The protein belongs to the glycosyl hydrolase 85 family. Widely expressed. Expressed at higher level in thymus and spleen.

The protein resides in the cytoplasm. It is found in the cytosol. The enzyme catalyses an N(4)-(oligosaccharide-(1-&gt;3)-[oligosaccharide-(1-&gt;6)]-beta-D-Man-(1-&gt;4)-beta-D-GlcNAc-(1-&gt;4)-alpha-D-GlcNAc)-L-asparaginyl-[protein] + H2O = an oligosaccharide-(1-&gt;3)-[oligosaccharide-(1-&gt;6)]-beta-D-Man-(1-&gt;4)-D-GlcNAc + N(4)-(N-acetyl-beta-D-glucosaminyl)-L-asparaginyl-[protein]. In terms of biological role, endoglycosidase that releases N-glycans from glycoproteins by cleaving the beta-1,4-glycosidic bond in the N,N'-diacetylchitobiose core. Involved in the processing of free oligosaccharides in the cytosol. In Homo sapiens (Human), this protein is Cytosolic endo-beta-N-acetylglucosaminidase (ENGASE).